Reading from the N-terminus, the 189-residue chain is Thioredoxin-like protein CITRX, chloroplastic (189 aa).

Residues 1–56 constitute a chloroplast transit peptide; that stretch reads MAMAAAASLLPASAAPTLPGRAFRPPRNSTPTASLSCDGGSRCRGVGLGVILGGCR. In terms of domain architecture, Thioredoxin spans 72-189; it reads GSGKYIAPDY…MIRNIIDNEL (118 aa). Residues C112 and C115 each act as nucleophile in the active site. C112 and C115 form a disulfide bridge.

The protein belongs to the thioredoxin family. Plant CITRX-type subfamily.

It is found in the plastid. It localises to the chloroplast. Its function is as follows. Probable thiol-disulfide oxidoreductase that may play a role in proper chloroplast development. This Oryza sativa subsp. japonica (Rice) protein is Thioredoxin-like protein CITRX, chloroplastic.